A 326-amino-acid chain; its full sequence is Probable cell division protein WhiA (326 aa).

Positions 275–308 (SLEELGALADPPLTKDAIAGRIRRLLALADKRAR) form a DNA-binding region, H-T-H motif.

Belongs to the WhiA family.

Its function is as follows. Involved in cell division and chromosome segregation. This is Probable cell division protein WhiA from Salinispora arenicola (strain CNS-205).